Consider the following 379-residue polypeptide: DNA (cytosine-5)-methyltransferase (379 aa).

Residues 4-366 (LRVLEFYSGI…KVLVSPNEEE (363 aa)) form the SAM-dependent MTase C5-type domain. Residue Cys-78 is part of the active site. Residues 178 to 192 (KKEQDKHNEKVDENK) are compositionally biased toward basic and acidic residues. The interval 178–205 (KKEQDKHNEKVDENKLNNNSNNNNEQNK) is disordered. A compositionally biased stretch (low complexity) spans 193 to 203 (LNNNSNNNNEQ).

This sequence belongs to the class I-like SAM-binding methyltransferase superfamily. C5-methyltransferase family.

The protein resides in the nucleus. The catalysed reaction is a 2'-deoxycytidine in DNA + S-adenosyl-L-methionine = a 5-methyl-2'-deoxycytidine in DNA + S-adenosyl-L-homocysteine + H(+). Its function is as follows. Involved in epigenetic gene silencing. Methylates specific cytosine residues in the retrotransposons DIRS-1 and Skipper. The chain is DNA (cytosine-5)-methyltransferase (dnmA) from Dictyostelium discoideum (Social amoeba).